The sequence spans 230 residues: uncharacterized protein (230 aa).

Belongs to the transferase hexapeptide repeat family.

This is an uncharacterized protein from Escherichia coli O6:K15:H31 (strain 536 / UPEC).